The primary structure comprises 252 residues: 5'-nucleotidase SurE (252 aa).

Positions 8, 9, 39, and 91 each coordinate a divalent metal cation.

Belongs to the SurE nucleotidase family. It depends on a divalent metal cation as a cofactor.

The protein resides in the cytoplasm. The catalysed reaction is a ribonucleoside 5'-phosphate + H2O = a ribonucleoside + phosphate. Functionally, nucleotidase that shows phosphatase activity on nucleoside 5'-monophosphates. The protein is 5'-nucleotidase SurE of Legionella pneumophila (strain Lens).